The primary structure comprises 156 residues: MFLSTFEKQLDSKRRIVVPQEFRAAVSGPFDGIFCFPSIEADCLEAGGKALFDRYQAVIEEMPFGDPTRTALETSILGGMAKLTFDTAGRITLPDHLCDMFGLTDSVAVVGMGERFQIWSREAFQAHRAQQRDLAREGLAALRAQQRAAKFAGGAA.

SpoVT-AbrB domains lie at 5-51 (TFEK…GKAL) and 80-123 (MAKL…SREA).

Belongs to the MraZ family. In terms of assembly, forms oligomers.

The protein localises to the cytoplasm. Its subcellular location is the nucleoid. The chain is Transcriptional regulator MraZ from Caulobacter vibrioides (strain ATCC 19089 / CIP 103742 / CB 15) (Caulobacter crescentus).